The primary structure comprises 213 residues: V-type proton ATPase subunit c'' (213 aa).

Residues 1–14 lie on the Vacuolar side of the membrane; that stretch reads MNKESKDDDMSLGK. Residues 15–35 form a helical membrane-spanning segment; it reads FSFSHFLYYLVLIVVIVYGLY. Over 36-61 the chain is Cytoplasmic; the sequence is KLFTGHGSDINFGKFLLRTSPYMWAN. The chain crosses the membrane as a helical span at residues 62-82; it reads LGIALCVGLSVVGAAWGIFIT. The Vacuolar portion of the chain corresponds to 83–100; that stretch reads GSSMIGAGVRAPRITTKN. A helical membrane pass occupies residues 101–121; the sequence is LISIIFCEVVAIYGLIIAIVF. The Cytoplasmic segment spans residues 122-144; the sequence is SSKLTVATAENMYSKSNLYTGYS. A helical membrane pass occupies residues 145-165; the sequence is LFWAGITVGASNLICGIAVGI. Residues 166 to 183 are Vacuolar-facing; that stretch reads TGATAAISDAADSALFVK. The chain crosses the membrane as a helical span at residues 184–204; the sequence is ILVIEIFGSILGLLGLIVGLL. Residues 205–213 are Cytoplasmic-facing; sequence MAGKASEFQ.

The protein belongs to the V-ATPase proteolipid subunit family. In terms of assembly, V-ATPase is a heteromultimeric enzyme composed of a peripheral catalytic V1 complex (components A to H) attached to an integral membrane V0 proton pore complex (components: a, c, c', c'', d, e, f and VOA1). The decameric c-ring forms the proton-conducting pore, and is composed of eight proteolipid subunits c, one subunit c' and one subunit c''.

The protein resides in the vacuole membrane. Its function is as follows. Proton-conducting pore forming subunit of the V0 complex of vacuolar(H+)-ATPase (V-ATPase), a multisubunit enzyme composed of a peripheral complex (V1) that hydrolyzes ATP and a membrane integral complex (V0) that translocates protons. V-ATPase is responsible for acidifying and maintaining the pH of intracellular compartments. The chain is V-type proton ATPase subunit c'' (VMA16) from Saccharomyces cerevisiae (strain ATCC 204508 / S288c) (Baker's yeast).